The sequence spans 683 residues: Dixin (683 aa).

Leu2 carries the N-myristoyl glycine lipid modification. A Calponin-homology (CH) domain is found at 20–127 (EQQLQAYVAW…LVLALAAHFK (108 aa)). The tract at residues 127-300 (KPGSSRTVNQ…LEKEMEEAKK (174 aa)) is actin-binding. Ser186 is modified (phosphoserine). Positions 207 to 235 (GQQRSPSESSCSSLTSPSPIHSAKSESII) are disordered. Residues 211–228 (SPSESSCSSLTSPSPIHS) show a composition bias toward low complexity. Residue Ser231 is modified to Phosphoserine. Positions 279–452 (SWEEQLLEQQ…EALRKLSDVS (174 aa)) form a coiled coil. The segment covering 482-492 (NYNSHNSQSNG) has biased composition (polar residues). Disordered regions lie at residues 482–509 (NYNS…SNRG) and 556–594 (TQKK…QSSP). Ser590 is modified (phosphoserine). Residues 600–680 (CTKVLYFTDR…KIVAWVEEDH (81 aa)) enclose the DIX domain.

Belongs to the DIXDC1 family. As to quaternary structure, isoform 1 but not isoform 2 binds filamentous actin. Interacts with the complex composed of DVL2 and Rac. Interacts with AXIN1; competes with MAP3K1. Interacts with MAP3K4 preventing MAP3K4 interaction with AXIN1. Directly interacts (via DIX domain) with DVL2 (via DIX domain). Interacts with gamma-tubulin. Post-translationally, phosphorylated on tyrosine and serine residues. Polyubiquitinated, leading to its proteasomal degradation. WNT3A signaling increases DIXDC1 protein levels by inhibiting its ubiquitination and subsequent degradation. As to expression, ubiquitously expressed with higher expression in cardiac and skeletal muscles.

It localises to the cell junction. The protein resides in the focal adhesion. It is found in the cytoplasm. Its subcellular location is the cytoskeleton. The protein localises to the stress fiber. In terms of biological role, positive effector of the Wnt signaling pathway; activates WNT3A signaling via DVL2. Regulates JNK activation by AXIN1 and DVL2. The chain is Dixin (DIXDC1) from Homo sapiens (Human).